Here is a 355-residue protein sequence, read N- to C-terminus: MADSTTMEHDGRGTKRKREADGGSGQGVGKGNSNAVKEGYGPNITEMVPRNIFNKGNHTIYHVVKTQKYLDFNYVTNQNPYIIPYQTAGFWGSMWDQTDIGNNQSINIMKALNAVALGVTWIKGEITFEVYSVTRQRLLTGTTNQTTWDFETSQNMFIADADREPENFNLETVAATGPLAQQTTQTLLFNSHNDRYTKYELPQRNQYTREINFQQLTNNYMWRPLDISKETNFRSLIPMSEGVYTKSENLRQTEFTYETTTYATSGATTRQTLFRNRTSYPRMHIAQPQVPDETGFMKFRYQVRMSTKLHLNFHMYPDYATNNNLEYMHRQTILLPQVAETNGIVACMPYEINTQ.

Positions 1-21 are enriched in basic and acidic residues; sequence MADSTTMEHDGRGTKRKREAD. The tract at residues 1–41 is disordered; it reads MADSTTMEHDGRGTKRKREADGGSGQGVGKGNSNAVKEGYG.

Belongs to the parvoviridae capsid protein family.

The protein resides in the virion. In terms of biological role, capsid protein self-assembles to form an icosahedral capsid with a T=1 symmetry, about 22 nm in diameter, and consisting of 60 copies of size variants of the capsid proteins, which differ in the N-terminushe capsid encapsulates the genomic ssDNA. Capsid proteins are responsible for the attachment to host cell receptors. This attachment induces virion internalization predominantly through clathrin-dependent endocytosis. The protein is Capsid protein VP1/VP2 (VP) of Aedes albopictus densovirus (isolate Boublik/1994) (AalDNV).